A 214-amino-acid chain; its full sequence is Phosphoenolpyruvate guanylyltransferase (214 aa).

The phosphoenolpyruvate site is built by Thr148, Gly163, and Ser166.

The protein belongs to the CofC family.

The enzyme catalyses phosphoenolpyruvate + GTP + H(+) = enolpyruvoyl-2-diphospho-5'-guanosine + diphosphate. Its pathway is cofactor biosynthesis; coenzyme F420 biosynthesis. Its function is as follows. Guanylyltransferase that catalyzes the activation of phosphoenolpyruvate (PEP) as enolpyruvoyl-2-diphospho-5'-guanosine, via the condensation of PEP with GTP. It is involved in the biosynthesis of coenzyme F420, a hydride carrier cofactor. The chain is Phosphoenolpyruvate guanylyltransferase from Mycobacterium tuberculosis (strain KZN 1435 / MDR).